The sequence spans 522 residues: Probable poly(ADP-ribose) glycohydrolase 2 (522 aa).

The protein belongs to the poly(ADP-ribose) glycohydrolase family.

It catalyses the reaction [(1''-&gt;2')-ADP-alpha-D-ribose](n) + H2O = [(1''-&gt;2')-ADP-alpha-D-ribose](n-1) + ADP-D-ribose. Functionally, poly(ADP-ribose) synthesized after DNA damage is only present transiently and is rapidly degraded by poly(ADP-ribose) glycohydrolase. This chain is Probable poly(ADP-ribose) glycohydrolase 2 (PARG2), found in Arabidopsis thaliana (Mouse-ear cress).